A 440-amino-acid chain; its full sequence is Probable circularly permuted 1,3-beta-glucanase (440 aa).

Positions M1–A20 are cleaved as a signal peptide. Positions G100–H112 are enriched in basic and acidic residues. 2 disordered regions span residues G100–K126 and P153–G195. Over residues E113 to E125 the composition is skewed to basic residues. The segment covering P153–G164 has biased composition (low complexity). Over residues G177–P186 the composition is skewed to basic and acidic residues. The ExDxxE motif signature appears at E350 to E355.

It belongs to the PGA52 family.

It is found in the secreted. The enzyme catalyses Hydrolysis of (1-&gt;3)-beta-D-glucosidic linkages in (1-&gt;3)-beta-D-glucans.. In terms of biological role, probable circularly permuted 1,3-beta-glucanase involved in cell wall modification through beta-1,3-glucan network alterations such as increased branching or remodeling. In Arthroderma benhamiae (strain ATCC MYA-4681 / CBS 112371) (Trichophyton mentagrophytes), this protein is Probable circularly permuted 1,3-beta-glucanase.